Here is a 339-residue protein sequence, read N- to C-terminus: Aspartate carbamoyltransferase catalytic subunit (339 aa).

Positions 69 and 70 each coordinate carbamoyl phosphate. Lys97 serves as a coordination point for L-aspartate. Carbamoyl phosphate-binding residues include Arg119, His149, and Gln152. L-aspartate contacts are provided by Arg182 and Arg237. Carbamoyl phosphate-binding residues include Gly278 and Pro279.

It belongs to the aspartate/ornithine carbamoyltransferase superfamily. ATCase family. In terms of assembly, heterododecamer (2C3:3R2) of six catalytic PyrB chains organized as two trimers (C3), and six regulatory PyrI chains organized as three dimers (R2).

It carries out the reaction carbamoyl phosphate + L-aspartate = N-carbamoyl-L-aspartate + phosphate + H(+). The protein operates within pyrimidine metabolism; UMP biosynthesis via de novo pathway; (S)-dihydroorotate from bicarbonate: step 2/3. Functionally, catalyzes the condensation of carbamoyl phosphate and aspartate to form carbamoyl aspartate and inorganic phosphate, the committed step in the de novo pyrimidine nucleotide biosynthesis pathway. The chain is Aspartate carbamoyltransferase catalytic subunit from Hydrogenovibrio crunogenus (strain DSM 25203 / XCL-2) (Thiomicrospira crunogena).